A 140-amino-acid polypeptide reads, in one-letter code: Nucleoside diphosphate kinase (140 aa).

ATP-binding residues include Lys-11, Phe-59, Arg-87, Thr-93, Arg-104, and Asn-114. His-117 acts as the Pros-phosphohistidine intermediate in catalysis.

Belongs to the NDK family. In terms of assembly, homotetramer. Mg(2+) is required as a cofactor.

It localises to the cytoplasm. The enzyme catalyses a 2'-deoxyribonucleoside 5'-diphosphate + ATP = a 2'-deoxyribonucleoside 5'-triphosphate + ADP. It catalyses the reaction a ribonucleoside 5'-diphosphate + ATP = a ribonucleoside 5'-triphosphate + ADP. Its function is as follows. Major role in the synthesis of nucleoside triphosphates other than ATP. The ATP gamma phosphate is transferred to the NDP beta phosphate via a ping-pong mechanism, using a phosphorylated active-site intermediate. The sequence is that of Nucleoside diphosphate kinase from Rhodospirillum rubrum (strain ATCC 11170 / ATH 1.1.1 / DSM 467 / LMG 4362 / NCIMB 8255 / S1).